Reading from the N-terminus, the 972-residue chain is Glycine dehydrogenase (decarboxylating) (972 aa).

N6-(pyridoxal phosphate)lysine is present on lysine 713.

Belongs to the GcvP family. In terms of assembly, the glycine cleavage system is composed of four proteins: P, T, L and H. Pyridoxal 5'-phosphate is required as a cofactor.

The catalysed reaction is N(6)-[(R)-lipoyl]-L-lysyl-[glycine-cleavage complex H protein] + glycine + H(+) = N(6)-[(R)-S(8)-aminomethyldihydrolipoyl]-L-lysyl-[glycine-cleavage complex H protein] + CO2. The glycine cleavage system catalyzes the degradation of glycine. The P protein binds the alpha-amino group of glycine through its pyridoxal phosphate cofactor; CO(2) is released and the remaining methylamine moiety is then transferred to the lipoamide cofactor of the H protein. The protein is Glycine dehydrogenase (decarboxylating) of Aromatoleum aromaticum (strain DSM 19018 / LMG 30748 / EbN1) (Azoarcus sp. (strain EbN1)).